Reading from the N-terminus, the 127-residue chain is Large ribosomal subunit protein bL12 (127 aa).

The disordered stretch occupies residues 101 to 127; the sequence is VKTGVSKEEAEDAKKQLVESGAEVEIK. The segment covering 105–117 has biased composition (basic and acidic residues); that stretch reads VSKEEAEDAKKQL.

It belongs to the bacterial ribosomal protein bL12 family. In terms of assembly, homodimer. Part of the ribosomal stalk of the 50S ribosomal subunit. Forms a multimeric L10(L12)X complex, where L10 forms an elongated spine to which 2 to 4 L12 dimers bind in a sequential fashion. Binds GTP-bound translation factors.

Functionally, forms part of the ribosomal stalk which helps the ribosome interact with GTP-bound translation factors. Is thus essential for accurate translation. The sequence is that of Large ribosomal subunit protein bL12 from Geobacter metallireducens (strain ATCC 53774 / DSM 7210 / GS-15).